The sequence spans 2328 residues: Reducing polyketide synthase Preu2 (2328 aa).

Residues 1–259 enclose the Ketosynthase family 3 (KS3) domain; the sequence is MMAVHLAVAS…GSNVHVIVES (259 aa). Residues 376–696 are malonyl-CoA:ACP transacylase (MAT) domain; the sequence is IFTGQGAQWP…SGLLKRSSNS (321 aa). An N-terminal hotdog fold region spans residues 766–899; it reads NELLGEELSM…GSLTVQFGDD (134 aa). Residues 766–1057 form a dehydratase (DH) domain region; sequence NELLGEELSM…FCTAPFRMST (292 aa). Residues 766 to 1059 enclose the PKS/mFAS DH domain; the sequence is NELLGEELSM…TAPFRMSTPE (294 aa). Residue His798 is the Proton acceptor; for dehydratase activity of the active site. A C-terminal hotdog fold region spans residues 914-1059; sequence LTELDLDTFY…TAPFRMSTPE (146 aa). Residue Asp969 is the Proton donor; for dehydratase activity of the active site. The methyltransferase (MT) domain stretch occupies residues 1198–1419; the sequence is DGMLTQLYSE…VDERVVSLRD (222 aa). The ketoreductase (KR)domain stretch occupies residues 1932 to 2111; it reads CYIIIGTSDL…AASVVHLGHV (180 aa). One can recognise a Carrier domain in the interval 2231 to 2309; the sequence is SSSHDIIRNG…NIVDFAVAHL (79 aa). Ser2269 is subject to O-(pantetheine 4'-phosphoryl)serine.

It depends on pantetheine 4'-phosphate as a cofactor.

Functionally, reducing polyketide synthase; part of a gene cluster that mediates the biosynthesis of a yet unidentified natural product. The sequence is that of Reducing polyketide synthase Preu2 from Preussia isomera (Coprophilous fungus).